The primary structure comprises 397 residues: MSTTVYLQKDREKSLLRRHPWIFSKAIDKVKGKPEAGEPVDIVDQRGKWLARGAWSPDSQIRLRVWTFKQDEQIDTEFFVRRLQQAQAGRELLISRLQLSAYRLVAAESDLLPGITIDRYNDHLVCQLLSSGAEYHRHELISALQQLYPTCSIYERSDVAVRKKEGLAERTGLIYGEVPPDEVIIEENNGIKISVDIKGGHKTGFYLDQRDNRAIAGRYAKDRRVLNCFCYTGGFGVYALQGGAKEVINVDVSESALELAKHNATLNKLDLTKARFEKQDVFKLLREYRERGEKFDMIVLDPPKFAENKAQLIGACRGYKDINLLAFQLLNPEGILLTFSCSGLMTSELFQKIVADAALDAGREAQILERMTQAADHPIATPYPEGYYLKGLVVRAI.

Positions 2–81 (STTVYLQKDR…EQIDTEFFVR (80 aa)) constitute a PUA domain.

It belongs to the methyltransferase superfamily. RlmI family.

It is found in the cytoplasm. The catalysed reaction is cytidine(1962) in 23S rRNA + S-adenosyl-L-methionine = 5-methylcytidine(1962) in 23S rRNA + S-adenosyl-L-homocysteine + H(+). Functionally, specifically methylates the cytosine at position 1962 (m5C1962) of 23S rRNA. In Tolumonas auensis (strain DSM 9187 / NBRC 110442 / TA 4), this protein is Ribosomal RNA large subunit methyltransferase I.